A 144-amino-acid chain; its full sequence is D-aminoacyl-tRNA deacylase (144 aa).

A Gly-cisPro motif, important for rejection of L-amino acids motif is present at residues 137-138 (GP).

The protein belongs to the DTD family. As to quaternary structure, homodimer.

The protein localises to the cytoplasm. It carries out the reaction glycyl-tRNA(Ala) + H2O = tRNA(Ala) + glycine + H(+). The catalysed reaction is a D-aminoacyl-tRNA + H2O = a tRNA + a D-alpha-amino acid + H(+). In terms of biological role, an aminoacyl-tRNA editing enzyme that deacylates mischarged D-aminoacyl-tRNAs. Also deacylates mischarged glycyl-tRNA(Ala), protecting cells against glycine mischarging by AlaRS. Acts via tRNA-based rather than protein-based catalysis; rejects L-amino acids rather than detecting D-amino acids in the active site. By recycling D-aminoacyl-tRNA to D-amino acids and free tRNA molecules, this enzyme counteracts the toxicity associated with the formation of D-aminoacyl-tRNA entities in vivo and helps enforce protein L-homochirality. The sequence is that of D-aminoacyl-tRNA deacylase from Acinetobacter baumannii (strain SDF).